The sequence spans 445 residues: UDP-N-acetylmuramoylalanine--D-glutamate ligase (445 aa).

117-123 (GSNGKTT) contacts ATP.

This sequence belongs to the MurCDEF family.

The protein resides in the cytoplasm. It catalyses the reaction UDP-N-acetyl-alpha-D-muramoyl-L-alanine + D-glutamate + ATP = UDP-N-acetyl-alpha-D-muramoyl-L-alanyl-D-glutamate + ADP + phosphate + H(+). It participates in cell wall biogenesis; peptidoglycan biosynthesis. Cell wall formation. Catalyzes the addition of glutamate to the nucleotide precursor UDP-N-acetylmuramoyl-L-alanine (UMA). In Neisseria meningitidis serogroup B (strain ATCC BAA-335 / MC58), this protein is UDP-N-acetylmuramoylalanine--D-glutamate ligase.